The following is a 181-amino-acid chain: 3-isopropylmalate dehydratase small subunit (181 aa).

It belongs to the LeuD family. LeuD type 2 subfamily. Heterodimer of LeuC and LeuD.

The catalysed reaction is (2R,3S)-3-isopropylmalate = (2S)-2-isopropylmalate. It participates in amino-acid biosynthesis; L-leucine biosynthesis; L-leucine from 3-methyl-2-oxobutanoate: step 2/4. In terms of biological role, catalyzes the isomerization between 2-isopropylmalate and 3-isopropylmalate, via the formation of 2-isopropylmaleate. The protein is 3-isopropylmalate dehydratase small subunit of Deinococcus deserti (strain DSM 17065 / CIP 109153 / LMG 22923 / VCD115).